A 242-amino-acid chain; its full sequence is DNA repair protein RecO (242 aa).

Belongs to the RecO family. Monomer.

Functionally, involved in DNA repair and RecF pathway recombination. The polypeptide is DNA repair protein RecO (Shigella dysenteriae serotype 1 (strain Sd197)).